The following is a 716-amino-acid chain: MAEEFITPVYCTGVSAQVQKQRAKELGLGRHENAIKYLGQDYEQLRVHCLQRGALFRDEAFPPVPQSLGFKELGPNSSKTYGIKWKRPTELFSNPQFIVDGATRTDICQGALGDCWLLAAIASLTLNDTLLHRVVPHGQSFQDGYAGIFHFQLWQFGEWVDVVVDDLLPTKDGKLVFVHSAQGNEFWSALLEKAYAKVNGSYEALSGGSTSEGFEDFTGGVTEWYELRKAPSDLYNIILKALERGSLLGCSIDISSILDMEAVTFKKLVKGHAYSVTGAKQVNYQGQMVNLIRMRNPWGEVEWTGAWSDGSSEWNGVDPYMREQLRVKMEDGEFWMSFRDFMREFTRLEICNLTPDALKSQRFRNWNTTLYEGTWRRGSTAGGCRNYPATFWVNPQFKIRLEETDDPDPDDYGGRESGCSFLLALMQKHRRRERRFGRDMETIGFAVYEVPPELMGQPAVHLKRDFFLSNASRARSEQFINLREVSTRFRLPPGEYVVVPSTFEPNKEGDFVLRFFSEKSAGTQELDDQVQANLPDEQVLSEEEIDENFKSLFRQLAGEDMEISVKELRTILNRIISKHKDLRTTGFSLESCRSMVNLMDRDGNGKLGLVEFNILWNRIRNYLSIFRKFDLDKSGSMSAYEMRMAIEFAGFKLNKKLYELIITRYSEPDLAVDFDNFVCCLVRLETMFRFFKTLDTDLDGVVTFDLFKWLQLTMFA.

The Calpain catalytic domain occupies 55 to 354; it reads LFRDEAFPPV…FTRLEICNLT (300 aa). Residues glutamine 109 and aspartate 114 each contribute to the Ca(2+) site. Residues cysteine 115, histidine 272, and asparagine 296 contribute to the active site. Ca(2+) is bound by residues aspartate 318 and glutamate 323. Threonine 354 bears the Phosphothreonine mark. Positions 355 to 528 are domain III; sequence PDALKSQRFR…KSAGTQELDD (174 aa). Residues 529–544 are linker; sequence QVQANLPDEQVLSEEE. EF-hand domains follow at residues 543 to 578, 587 to 620, 617 to 652, and 682 to 716; these read EEIDENFKSLFRQLAGEDMEISVKELRTILNRIISK, FSLESCRSMVNLMDRDGNGKLGLVEFNILWNRIR, NRIRNYLSIFRKFDLDKSGSMSAYEMRMAIEFAGFK, and VRLETMFRFFKTLDTDLDGVVTFDLFKWLQLTMFA. A domain IV region spans residues 545-715; sequence IDENFKSLFR…LFKWLQLTMF (171 aa). The Ca(2+) site is built by aspartate 600, aspartate 602, asparagine 604, lysine 606, glutamate 611, aspartate 630, aspartate 632, serine 634, serine 636, and glutamate 641.

Belongs to the peptidase C2 family. Forms a heterodimer with a small (regulatory) subunit CAPNS1. Requires Ca(2+) as cofactor. Post-translationally, undergoes calcium-induced successive autoproteolytic cleavages that generate a membrane-bound 78 kDa active form and an intracellular 75 kDa active form. Calpastatin reduces with high efficiency the transition from 78 kDa to 75 kDa calpain forms.

The protein resides in the cytoplasm. The protein localises to the cell membrane. The enzyme catalyses Broad endopeptidase specificity.. With respect to regulation, activated by micromolar concentrations of calcium and inhibited by calpastatin. Calcium-regulated non-lysosomal thiol-protease which catalyzes limited proteolysis of substrates involved in cytoskeletal remodeling and signal transduction. Proteolytically cleaves CTBP1. Cleaves and activates caspase-7 (CASP7). The chain is Calpain-1 catalytic subunit from Bos taurus (Bovine).